A 162-amino-acid polypeptide reads, in one-letter code: AP-1 complex subunit sigma-1 (162 aa).

It belongs to the adaptor complexes small subunit family. As to quaternary structure, adaptor protein complex 1 (AP-1) is a heterotetramer composed of two large adaptins (gamma-type subunit apl4 and beta-type subunit apl2), a medium adaptin (mu-type subunit apm1) and a small adaptin (sigma-type subunit aps1). AP-1 interacts with clathrin.

Its subcellular location is the cytoplasm. The protein localises to the nucleus. It is found in the cytoplasmic vesicle. The protein resides in the clathrin-coated vesicle membrane. It localises to the endosome. Its subcellular location is the golgi apparatus. Functionally, component of the AP-1 complex which links clathrin to receptors in coated vesicles. Clathrin-associated protein complexes are believed to interact with the cytoplasmic tails of membrane proteins, leading to their selection and concentration. This chain is AP-1 complex subunit sigma-1 (vas2), found in Schizosaccharomyces pombe (strain 972 / ATCC 24843) (Fission yeast).